Consider the following 427-residue polypeptide: Lactadherin (427 aa).

The signal sequence occupies residues Met1–Ala22. EGF-like domains follow at residues Ser24 to Asn61 and Glu64 to Glu108. Disulfide bonds link Cys28–Cys39, Cys33–Cys49, and Cys51–Cys60. The N-linked (GlcNAc...) asparagine glycan is linked to Asn61. 6 disulfide bridges follow: Cys68/Cys79, Cys73/Cys96, Cys98/Cys107, Cys111/Cys267, Cys254/Cys258, and Cys272/Cys427. Residues Arg87–Asp89 carry the Cell attachment site motif. 2 F5/8 type C domains span residues Cys111–Cys267 and Cys272–Cys427. Asn230 is a glycosylation site (N-linked (GlcNAc...) asparagine). N-linked (GlcNAc...) asparagine glycosylation is found at Asn280 and Asn390.

Spleen, lung, heart, brain and muscle.

The protein localises to the membrane. It is found in the secreted. It localises to the cytoplasmic vesicle. Its subcellular location is the secretory vesicle. The protein resides in the acrosome membrane. In terms of biological role, contributes to phagocytic removal of apoptotic cells in many tissues. Plays an important role in the maintenance of intestinal epithelial homeostasis and the promotion of mucosal healing. Promotes VEGF-dependent neovascularization. Specific ligand for the alpha-v/beta-3 and alpha-v/beta-5 receptors. Also binds to phosphatidylserine-enriched cell surfaces in a receptor-independent manner. Zona pellucida-binding protein which may play a role in gamete interaction. Appears to participate in the O-acetylation of GD3 ganglioside sialic acid. This chain is Lactadherin (Mfge8), found in Rattus norvegicus (Rat).